The following is a 442-amino-acid chain: D-inositol 3-phosphate glycosyltransferase (442 aa).

A 1D-myo-inositol 3-phosphate-binding site is contributed by His15. Residues 21-22 (QP) and Gly29 contribute to the UDP-N-acetyl-alpha-D-glucosamine site. 1D-myo-inositol 3-phosphate is bound by residues 26-31 (DAGGMN), Lys84, Tyr117, Thr141, and Arg161. UDP-N-acetyl-alpha-D-glucosamine-binding residues include Arg235, Lys240, and Gln299. The Mg(2+) site is built by Tyr308, Arg309, and Ser311. UDP-N-acetyl-alpha-D-glucosamine is bound by residues Glu321 and Glu329. Thr335 provides a ligand contact to Mg(2+).

Belongs to the glycosyltransferase group 1 family. MshA subfamily. In terms of assembly, homodimer.

The enzyme catalyses 1D-myo-inositol 3-phosphate + UDP-N-acetyl-alpha-D-glucosamine = 1D-myo-inositol 2-acetamido-2-deoxy-alpha-D-glucopyranoside 3-phosphate + UDP + H(+). Its function is as follows. Catalyzes the transfer of a N-acetyl-glucosamine moiety to 1D-myo-inositol 3-phosphate to produce 1D-myo-inositol 2-acetamido-2-deoxy-glucopyranoside 3-phosphate in the mycothiol biosynthesis pathway. The polypeptide is D-inositol 3-phosphate glycosyltransferase (Rhodococcus erythropolis (strain PR4 / NBRC 100887)).